A 253-amino-acid chain; its full sequence is Indole-3-glycerol phosphate synthase (253 aa).

It belongs to the TrpC family.

The catalysed reaction is 1-(2-carboxyphenylamino)-1-deoxy-D-ribulose 5-phosphate + H(+) = (1S,2R)-1-C-(indol-3-yl)glycerol 3-phosphate + CO2 + H2O. Its pathway is amino-acid biosynthesis; L-tryptophan biosynthesis; L-tryptophan from chorismate: step 4/5. The polypeptide is Indole-3-glycerol phosphate synthase (Bacillus thuringiensis subsp. konkukian (strain 97-27)).